The following is a 235-amino-acid chain: SMN complex subunit yip11/gem2 (235 aa).

Residues 1–34 (MPSKRKRNPLQYQTSGSLDEETNQRSAFPQIDNN) are disordered. Residues 24 to 34 (QRSAFPQIDNN) show a composition bias toward polar residues. Serine 117 and serine 118 each carry phosphoserine.

This sequence belongs to the gemin-2 family. In terms of assembly, part of the core SMN complex at least composed of smn1, yip11/gem2, gem6, gem7 and gem8. Interacts with smn1; the interaction is direct.

Its subcellular location is the nucleus. Its function is as follows. The SMN complex catalyzes the assembly of small nuclear ribonucleoproteins (snRNPs), the building blocks of the spliceosome, and thereby plays an important role in the splicing of cellular pre-mRNAs. Most spliceosomal snRNPs contain a common set of Sm proteins smb1, smd1, smd2, smd3, sme1, smf1 and smg1 that assemble in a heptameric protein ring on the Sm site of the small nuclear RNA to form the core snRNP. In the cytosol, the Sm proteins smd1, smd2, sme1, smf1 and smg1 (5Sm) are trapped in an inactive 6S pICln-Sm complex by the chaperone saf5. To complete assembly of core snRNPs, the SMN complex accepts 5Sm from saf5. Binding of snRNA inside 5Sm ultimately triggers eviction of the SMN complex, thereby allowing binding of smd3 and smb1 to complete assembly of the core snRNP. Within the SMN complex, yip11/gem2 constrains the conformation of 5Sm, thereby promoting 5Sm binding to snRNA containing the snRNP code (a nonameric Sm site and a 3'-adjacent stem-loop), thus preventing progression of assembly until a cognate substrate is bound. This Schizosaccharomyces pombe (strain 972 / ATCC 24843) (Fission yeast) protein is SMN complex subunit yip11/gem2 (yip11).